The primary structure comprises 1234 residues: Chromosome-associated kinesin KIF4B (1234 aa).

Residues 9–336 (PVRVALRCRP…LRYADRARKI (328 aa)) form the Kinesin motor domain. 88–95 (GQTGSGKT) is a binding site for ATP. Residues 350–999 (ELNHLKQQVQ…IKQKLILLQV (650 aa)) adopt a coiled-coil conformation. Ser394 carries the phosphoserine modification. Disordered stretches follow at residues 494-513 (EEAQ…AFTT) and 712-737 (KRLK…HGKE). Residues 498 to 513 (VETSPETSRSSDAFTT) are compositionally biased toward polar residues. The interval 663–1234 (QWKQKKDKEV…GCSPIEEEAH (572 aa)) is interaction with PRC1. Residues 713 to 737 (RLKDALQKQREVTDKRKETQSHGKE) are compositionally biased toward basic and acidic residues. Residues 793–798 (PKLRKC) carry the Nuclear localization signal motif. Thr799 bears the Phosphothreonine mark. Ser801, Ser951, Ser1001, Ser1013, Ser1017, and Ser1028 each carry phosphoserine. The segment at 1000 to 1234 (ASRQKHLPND…GCSPIEEEAH (235 aa)) is globular. Disordered stretches follow at residues 1007–1030 (PNDT…PSRV), 1052–1076 (VNEH…KPTK), 1122–1143 (RQQG…GSFK), and 1183–1234 (TAPA…EEAH). Over residues 1056–1071 (EDGDGDGDSDEGDDEE) the composition is skewed to acidic residues. The segment at 1086–1144 (QGCSCKGWCGNKQCGCRKQKSDCGVDCSCDPTKCRNRQQGKDSLGTVEQTQDSEGSFKL) is CRD; required for [4Fe-4S] cluster binding and localization to the spindle midzone and midbody during anaphase and telophase. Ser1128 is modified (phosphoserine). Residue Thr1183 is modified to Phosphothreonine. Ser1188 carries the post-translational modification Phosphoserine. A Glycyl lysine isopeptide (Lys-Gly) (interchain with G-Cter in SUMO2) cross-link involves residue Lys1196. Ser1227 carries the post-translational modification Phosphoserine.

It belongs to the TRAFAC class myosin-kinesin ATPase superfamily. Kinesin family. Chromokinesin subfamily. The cofactor is [2Fe-2S] cluster. [4Fe-4S] cluster serves as cofactor. In terms of tissue distribution, specifically expressed in testis.

It localises to the nucleus matrix. The protein resides in the cytoplasm. The protein localises to the cytoskeleton. Its function is as follows. Iron-sulfur (Fe-S) cluster binding motor protein that has a role in chromosome segregation during mitosis. Translocates PRC1 to the plus ends of interdigitating spindle microtubules during the metaphase to anaphase transition, an essential step for the formation of an organized central spindle midzone and midbody and for successful cytokinesis. May play a role in mitotic chromosomal positioning and bipolar spindle stabilization. This chain is Chromosome-associated kinesin KIF4B (KIF4B), found in Homo sapiens (Human).